Consider the following 256-residue polypeptide: 3-deoxy-manno-octulosonate cytidylyltransferase (256 aa).

Belongs to the KdsB family.

The protein resides in the cytoplasm. It catalyses the reaction 3-deoxy-alpha-D-manno-oct-2-ulosonate + CTP = CMP-3-deoxy-beta-D-manno-octulosonate + diphosphate. Its pathway is nucleotide-sugar biosynthesis; CMP-3-deoxy-D-manno-octulosonate biosynthesis; CMP-3-deoxy-D-manno-octulosonate from 3-deoxy-D-manno-octulosonate and CTP: step 1/1. It participates in bacterial outer membrane biogenesis; lipopolysaccharide biosynthesis. Functionally, activates KDO (a required 8-carbon sugar) for incorporation into bacterial lipopolysaccharide in Gram-negative bacteria. The chain is 3-deoxy-manno-octulosonate cytidylyltransferase from Histophilus somni (strain 129Pt) (Haemophilus somnus).